A 122-amino-acid polypeptide reads, in one-letter code: uncharacterized protein (122 aa).

The protein to B.subtilis YpdA.

This is an uncharacterized protein from Bacillus licheniformis.